Consider the following 511-residue polypeptide: 2-isopropylmalate synthase (511 aa).

The 264-residue stretch at 6-269 folds into the Pyruvate carboxyltransferase domain; that stretch reads IIIFDTTLRD…YTDIKCENIF (264 aa). Residues D15, H203, H205, and N239 each coordinate Mn(2+). Residues 394–511 are regulatory domain; the sequence is VLEKLSVISG…SLKVEERKMA (118 aa).

Belongs to the alpha-IPM synthase/homocitrate synthase family. LeuA type 1 subfamily. As to quaternary structure, homodimer. Mn(2+) serves as cofactor.

It localises to the cytoplasm. It carries out the reaction 3-methyl-2-oxobutanoate + acetyl-CoA + H2O = (2S)-2-isopropylmalate + CoA + H(+). It participates in amino-acid biosynthesis; L-leucine biosynthesis; L-leucine from 3-methyl-2-oxobutanoate: step 1/4. Catalyzes the condensation of the acetyl group of acetyl-CoA with 3-methyl-2-oxobutanoate (2-ketoisovalerate) to form 3-carboxy-3-hydroxy-4-methylpentanoate (2-isopropylmalate). The chain is 2-isopropylmalate synthase from Campylobacter jejuni subsp. jejuni serotype O:2 (strain ATCC 700819 / NCTC 11168).